The chain runs to 278 residues: MLTTTKVFFLLLTTWITWYAIVNPQSRAAPTLETIASLDLNNPTTYLSFITNIRTKVADKTEQCTIQKISKTFTQRYSYIDLIVSSTQKITLAIDMADLYVLGYSDIANNKGRAFFFKDVTEAVANNFFPGATGTNRIKLTFTGSYGDLEKNGGLRKDNPLGIFRLENSIVNIYGKAGDVKKQAKFFLLAIQMVSEAARFKYISDKIPSEKYEEVTVDEYMTALENNWAKLSTAVYNSKPSTTTATKCQLATSPVTISPWIFKTVEEIKLVMGLLKSS.

An N-terminal signal peptide occupies residues 1–28 (MLTTTKVFFLLLTTWITWYAIVNPQSRA). The cysteines at positions 64 and 248 are disulfide-linked. Glutamate 196 is an active-site residue.

The enzyme catalyses Endohydrolysis of the N-glycosidic bond at one specific adenosine on the 28S rRNA.. Functionally, inhibits viral infection of plants, and protein synthesis in vitro. The protein is Antiviral protein MAP of Mirabilis jalapa (Garden four-o'clock).